Here is a 141-residue protein sequence, read N- to C-terminus: Small ribosomal subunit protein eS17z (141 aa).

The protein belongs to the eukaryotic ribosomal protein eS17 family.

In Arabidopsis thaliana (Mouse-ear cress), this protein is Small ribosomal subunit protein eS17z (RPS17A).